The sequence spans 22 residues: thr operon leader peptide (22 aa).

A disordered region spans residues 1–22 (MRNISLTTTIITTTDTTGNGAG). Over residues 7 to 22 (TTTIITTTDTTGNGAG) the composition is skewed to low complexity.

It belongs to the thr operon leader peptide family.

Functionally, this protein is involved in control of the biosynthesis of threonine. The polypeptide is thr operon leader peptide (Serratia marcescens).